Here is a 483-residue protein sequence, read N- to C-terminus: CBL-interacting serine/threonine-protein kinase 19 (483 aa).

In terms of domain architecture, Protein kinase spans 28–282 (YEMGRLLGHG…MPDIMETSWF (255 aa)). ATP-binding positions include 34-42 (LGHGTFAKV) and Lys-57. Asp-150 (proton acceptor) is an active-site residue. The segment at 168-197 (DFGLSAVSDQIRQDGLFHTFCGTPAYVAPE) is activation loop. Residue Ser-172 is modified to Phosphoserine. Thr-186 bears the Phosphothreonine mark. Polar residues predominate over residues 313–322 (SVSGRSSTVS). The disordered stretch occupies residues 313–338 (SVSGRSSTVSEPEDFESFDGRRRGGS). In terms of domain architecture, NAF spans 340–364 (PRPASLNAFDLISFSPGFDLSGLFE). The tract at residues 367 to 396 (GEGSRFVSGAPVGQIISKLEEIARIVSFTV) is PPI. The segment at 459–483 (NLSSENGQRVSGSRSLPSFLLSDTD) is disordered.

It belongs to the protein kinase superfamily. CAMK Ser/Thr protein kinase family. SNF1 subfamily. Mn(2+) serves as cofactor.

The enzyme catalyses L-seryl-[protein] + ATP = O-phospho-L-seryl-[protein] + ADP + H(+). It carries out the reaction L-threonyl-[protein] + ATP = O-phospho-L-threonyl-[protein] + ADP + H(+). Its function is as follows. CIPK serine-threonine protein kinases interact with CBL proteins. Binding of a CBL protein to the regulatory NAF domain of CIPK protein lead to the activation of the kinase in a calcium-dependent manner. In Arabidopsis thaliana (Mouse-ear cress), this protein is CBL-interacting serine/threonine-protein kinase 19 (CIPK19).